Consider the following 321-residue polypeptide: MSNALEELKKYTTVVADTADFDVLSKYGSQDSTTNPSLVFQAASDPKYKSLIDDAIKYVNAKSGLSEKEKLSLAIDKLFVNFGVEILKIVPGRVSTEVDARLSYDIDANVKKGRELIALYKEAGIDKERVLIKLASTWEGIEAAKILEKEGIHCNLTLLFSLIQAAACAEAQVTLISPFVGRITDFYKSKQGVAGFEASKDPGVISVQQIYSYFKKHGYKTSVMGASFRNKEQTIELAGCDLLTISPNLLEELKNADASLVTKKLDSTKLPSDIPNKLDVSHSNFLWELNDNEMAYFKTGEGIRKFAEDLVKLENQIKKLL.

K133 functions as the Schiff-base intermediate with substrate in the catalytic mechanism.

It belongs to the transaldolase family. Type 1 subfamily. In terms of assembly, homodimer.

The protein localises to the cytoplasm. The enzyme catalyses D-sedoheptulose 7-phosphate + D-glyceraldehyde 3-phosphate = D-erythrose 4-phosphate + beta-D-fructose 6-phosphate. The protein operates within carbohydrate degradation; pentose phosphate pathway; D-glyceraldehyde 3-phosphate and beta-D-fructose 6-phosphate from D-ribose 5-phosphate and D-xylulose 5-phosphate (non-oxidative stage): step 2/3. Transaldolase is important for the balance of metabolites in the pentose-phosphate pathway. This chain is Probable transaldolase (tal), found in Dictyostelium discoideum (Social amoeba).